A 266-amino-acid polypeptide reads, in one-letter code: uncharacterized protein (266 aa).

This sequence belongs to the ascovirus HvAV ORF59 family.

This is an uncharacterized protein from Trichoplusia ni ascovirus 2c (TnAV-2c).